Reading from the N-terminus, the 568-residue chain is MAQINRKLYSSMYGITTGDIVTLGDTNLKIQVEKDYTTYGEECVFGGGKVIRDGMGQASGFCDEEVLDMVITNALIIDYKGIYKADIGIKNGKIKGIGKAGNPHIQPGVSPTLIIGTITEVVSGEGRILTAGAIDTHVHYISPQQADEALASGITTFVGGGTGPATGTYATTCTPGWYLRKMMEATDNIPINFGFLGKGNSSKSKALEGQIKAGALGLKLHEDWGSTPSVIDTSLKVADEYDVQICIHTDSINECGYIEDTLCAIDGRTIHAYHVEGAGGGHAPDIMKACEYANILPSSTTPTNPYSLNTIDEHLDMLMVCHHLDFNNPEDISFAQSRIRQQTIGAEDFLHDMGAISIFTSDSQAMGRIGEVICRTWQIASRMKEIRGFLSEDQMTGNDNYRVRRYIAKYTINAALAHGLSHIVGSVEKGKLADLVLWRPEFFGTKPDIVIKGGMIAYAQMGDPNASIPTPEPYISRPMYGAFGNAASATSCLFISEASIEAIKGYGLNKMLTVVKGCRVISKNDLKLNNYMPCIDIDSKTFEVSIDGVLISVKPAKKLPLAQLYNLF.

The 437-residue stretch at 132–568 (GAIDTHVHYI…LPLAQLYNLF (437 aa)) folds into the Urease domain. The Ni(2+) site is built by histidine 137, histidine 139, and lysine 219. Position 219 is an N6-carboxylysine (lysine 219). Residue histidine 221 coordinates substrate. Residues histidine 248 and histidine 274 each contribute to the Ni(2+) site. The active-site Proton donor is the histidine 322. Aspartate 362 lines the Ni(2+) pocket.

The protein belongs to the metallo-dependent hydrolases superfamily. Urease alpha subunit family. As to quaternary structure, heterotrimer of UreA (gamma), UreB (beta) and UreC (alpha) subunits. Three heterotrimers associate to form the active enzyme. The cofactor is Ni cation. Carboxylation allows a single lysine to coordinate two nickel ions.

The protein localises to the cytoplasm. It carries out the reaction urea + 2 H2O + H(+) = hydrogencarbonate + 2 NH4(+). Its pathway is nitrogen metabolism; urea degradation; CO(2) and NH(3) from urea (urease route): step 1/1. The sequence is that of Urease subunit alpha from Azobacteroides pseudotrichonymphae genomovar. CFP2.